The sequence spans 452 residues: Probable dihydrolipoyllysine-residue succinyltransferase component of 2-oxoglutarate dehydrogenase complex, mitochondrial (452 aa).

The Lipoyl-binding domain occupies 42 to 117; sequence STRIKTPPFP…TIDQDIAVID (76 aa). Residue Lys83 is modified to N6-lipoyllysine. Positions 119 to 225 are disordered; it reads SAAPPEGGSA…FSRNEDRVKM (107 aa). Basic and acidic residues-rich tracts occupy residues 130–144, 154–170, and 195–209; these read PKKD…DAAK, KPIE…EQKE, and AKSE…KATE. Residues His424 and Asp428 contribute to the active site.

This sequence belongs to the 2-oxoacid dehydrogenase family. Requires (R)-lipoate as cofactor.

It is found in the mitochondrion. The catalysed reaction is N(6)-[(R)-dihydrolipoyl]-L-lysyl-[protein] + succinyl-CoA = N(6)-[(R)-S(8)-succinyldihydrolipoyl]-L-lysyl-[protein] + CoA. Its pathway is amino-acid degradation; L-lysine degradation via saccharopine pathway; glutaryl-CoA from L-lysine: step 6/6. In terms of biological role, the 2-oxoglutarate dehydrogenase complex catalyzes the overall conversion of 2-oxoglutarate to succinyl-CoA and CO(2). It contains multiple copies of three enzymatic components: 2-oxoglutarate dehydrogenase (E1), dihydrolipoamide succinyltransferase (E2) and lipoamide dehydrogenase (E3). The protein is Probable dihydrolipoyllysine-residue succinyltransferase component of 2-oxoglutarate dehydrogenase complex, mitochondrial (kgd2) of Schizosaccharomyces pombe (strain 972 / ATCC 24843) (Fission yeast).